The following is a 701-amino-acid chain: Arachidonate 12-lipoxygenase, 12R-type (701 aa).

The PLAT domain maps to 2-119; it reads ATYKVKVATG…TLALREATGK (118 aa). The Lipoxygenase domain occupies 120–701; the sequence is ITADDTLPIL…PVLIENSISI (582 aa). 5 residues coordinate Fe cation: His398, His403, His578, Asn582, and Ile701.

Belongs to the lipoxygenase family. Requires Fe cation as cofactor. In terms of tissue distribution, expressed in skin epidermis and other stratified epithelia including tongue and forestomach. Low levels of expression are found in trachea, brain and lung. Not expressed in intestine, liver, kidney, adipose tissue, muscle or hematopoietic cells.

Its subcellular location is the cytoplasm. The protein localises to the perinuclear region. It carries out the reaction 1-O-methyl-(5Z,8Z,11Z,14Z)-eicosatetraenoate + O2 = 1-O-methyl (5Z,8Z,10E,12R,14Z)-hydroperoxyiecosatetraenoate. The enzyme catalyses 1-O-methyl-(5Z,8Z,11Z,14Z)-eicosatetraenoate + O2 = 1-O-methyl-8-hydroperoxy-(5Z,9E,11Z,14Z)-eicosatetraenoate. The catalysed reaction is (5Z,8Z,11Z,14Z)-eicosatetraenoate + O2 = (12R)-hydroperoxy-(5Z,8Z,10E,14Z)-eicosatetraenoate. It catalyses the reaction N-[omega-(9Z,12Z)-octadecadienoyloxy]acyl-beta-D-glucosyl-(1&lt;-&gt;1)-octadecasphing-4E-enine + O2 = N-[omega-(9R)-hydroperoxy-(10E,12Z)-octadecadienoyloxy]acyl-beta-D-glucosyl-(1&lt;-&gt;1)-octadecasphing-4E-enine. It carries out the reaction a N-[omega-(9Z,12Z)-octadecadienoyloxy]-acylsphin-4E-enine + O2 = a N-[omega-(9R)-hydroperoxy-(10E,12Z)-octadecadienoyloxy]-acylsphin-4E-enine. The enzyme catalyses (6Z,9Z,12Z)-octadecatrienoate + O2 = 10-hydroperoxy-(6Z,8E,12Z)-octadecatrienoate. The catalysed reaction is (4Z,7Z,10Z,13Z,16Z,19Z)-docosahexaenoate + O2 = 14-hydroperoxy-(4Z,7Z,10Z,12E,16Z,19Z)-docosahexaenoate. It catalyses the reaction (8Z,11Z,14Z)-eicosatrienoate + O2 = (8Z,10E,14Z)-12-hydroperoxyeicosatrienoate. It carries out the reaction (5Z,8Z,11Z,14Z,17Z)-eicosapentaenoate + O2 = (5Z,7Z,8Z,10E,14Z,17Z)-12-hydroperoxyeicosapentaenoate. The enzyme catalyses (6Z,9Z,12Z)-octadecatrienoate + O2 = 10R-hydroperoxy-(6Z,8E,12Z)-octadecatrienoate. The catalysed reaction is 1-O-methyl-(5Z,8Z,11Z,14Z)-eicosatetraenoate + O2 = 1-O-methyl-(8R)-hydroperoxy-(5Z,9E,11Z,14Z)-eicosatrienoate. It catalyses the reaction 1-O-methyl-(9Z,12Z)-octadecadienoate + O2 = 1-O-methyl-(9R)-hydroperoxy-(10E,12Z)-octadecadienoate. It carries out the reaction 1-O-methyl-20-hydroxy-(5Z,8Z,11Z,14Z)-eicosatetraenoate + O2 = 1-O-methyl-8-hydroperoxy-20-hydroxy-(5Z,9E,11Z,14Z)-eicosatetraenoate. The enzyme catalyses 1-O-methyl-20-hydroxy-(5Z,8Z,11Z,14Z)-eicosatetraenoate + O2 = 1-O-methyl-12-hydroperoxy-20-hydroxy-(5Z,8Z,10E,14Z)-eicosatetraenoate. The catalysed reaction is 1-O-methyl-20-hydroxy-(5Z,8Z,11Z,14Z)-eicosatetraenoate + O2 = 1-O-methyl-9-hydroperoxy-20-hydroxy-(5Z,7E,11Z,14Z)-eicosatetraenoate. It catalyses the reaction 1-O-methyl-(9Z,12Z)-octadecadienoate + O2 = 1-O-methyl-(13S)-hydroperoxy-(9Z,11E)-octadecadienoate. It functions in the pathway lipid metabolism; hydroperoxy eicosatetraenoic acid biosynthesis. It participates in lipid metabolism; sphingolipid metabolism. Increased by calcium. Its function is as follows. Catalyzes the regio and stereo-specific incorporation of a single molecule of dioxygen into free and esterified polyunsaturated fatty acids generating lipid hydroperoxides that can be further reduced to the corresponding hydroxy species. Does not convert arachidonic acid to (12R)-hydroperoxyeicosatetraenoic acid/(12R)-HPETE. In the skin, acts upstream of ALOXE3 on the lineolate moiety of esterified omega-hydroxyacyl-sphingosine (EOS) ceramides to produce an epoxy-ketone derivative, a crucial step in the conjugation of omega-hydroxyceramide to membrane proteins. Therefore plays a crucial role in the synthesis of corneocytes lipid envelope and the establishment of the skin barrier to water loss. May also play a role in the regulation of the expression of airway mucins. The polypeptide is Arachidonate 12-lipoxygenase, 12R-type (Mus musculus (Mouse)).